Consider the following 149-residue polypeptide: Putative pre-16S rRNA nuclease (149 aa).

This sequence belongs to the YqgF nuclease family.

The protein localises to the cytoplasm. Its function is as follows. Could be a nuclease involved in processing of the 5'-end of pre-16S rRNA. This chain is Putative pre-16S rRNA nuclease, found in Synechococcus sp. (strain ATCC 27144 / PCC 6301 / SAUG 1402/1) (Anacystis nidulans).